A 129-amino-acid polypeptide reads, in one-letter code: UPF0146 protein VNG_2609C (129 aa).

Belongs to the UPF0146 family.

The chain is UPF0146 protein VNG_2609C from Halobacterium salinarum (strain ATCC 700922 / JCM 11081 / NRC-1) (Halobacterium halobium).